A 146-amino-acid chain; its full sequence is Large ribosomal subunit protein uL15 (146 aa).

Residues 1 to 13 (MKLHELKPAEGSR) show a composition bias toward basic and acidic residues. Residues 1 to 57 (MKLHELKPAEGSRKVRNRVGRGTSSGNGKTSGRGQKGQKARSGVGLRPGFEGGQTPL) are disordered. Residues 23-35 (TSSGNGKTSGRGQ) show a composition bias toward gly residues.

Belongs to the universal ribosomal protein uL15 family. As to quaternary structure, part of the 50S ribosomal subunit.

Its function is as follows. Binds to the 23S rRNA. The chain is Large ribosomal subunit protein uL15 from Streptococcus thermophilus (strain CNRZ 1066).